The sequence spans 362 residues: Chorismate synthase (362 aa).

NADP(+)-binding residues include arginine 48 and arginine 54. FMN contacts are provided by residues 125–127, 238–239, glycine 278, 293–297, and arginine 319; these read RSS, NA, and KPTSS.

It belongs to the chorismate synthase family. Homotetramer. FMNH2 serves as cofactor.

The catalysed reaction is 5-O-(1-carboxyvinyl)-3-phosphoshikimate = chorismate + phosphate. It participates in metabolic intermediate biosynthesis; chorismate biosynthesis; chorismate from D-erythrose 4-phosphate and phosphoenolpyruvate: step 7/7. Its function is as follows. Catalyzes the anti-1,4-elimination of the C-3 phosphate and the C-6 proR hydrogen from 5-enolpyruvylshikimate-3-phosphate (EPSP) to yield chorismate, which is the branch point compound that serves as the starting substrate for the three terminal pathways of aromatic amino acid biosynthesis. This reaction introduces a second double bond into the aromatic ring system. The protein is Chorismate synthase of Tolumonas auensis (strain DSM 9187 / NBRC 110442 / TA 4).